Reading from the N-terminus, the 288-residue chain is Oxaloacetate decarboxylase (288 aa).

S47 provides a ligand contact to substrate. D85 contributes to the Mg(2+) binding site. Substrate-binding residues include R156 and H232.

It belongs to the isocitrate lyase/PEP mutase superfamily. Oxaloacetate decarboxylase family. As to quaternary structure, homotetramer; dimer of dimers. Mg(2+) is required as a cofactor.

The enzyme catalyses oxaloacetate + H(+) = pyruvate + CO2. Functionally, catalyzes the decarboxylation of oxaloacetate into pyruvate. Seems to play a role in maintaining cellular concentrations of bicarbonate and pyruvate. This Rhodopseudomonas palustris (strain BisB18) protein is Oxaloacetate decarboxylase.